The sequence spans 428 residues: Enolase (428 aa).

A (2R)-2-phosphoglycerate-binding site is contributed by glutamine 167. The active-site Proton donor is the glutamate 209. Residues aspartate 246, glutamate 289, and aspartate 316 each coordinate Mg(2+). 4 residues coordinate (2R)-2-phosphoglycerate: lysine 341, arginine 370, serine 371, and lysine 392. Lysine 341 acts as the Proton acceptor in catalysis.

Belongs to the enolase family. In terms of assembly, component of the RNA degradosome, a multiprotein complex involved in RNA processing and mRNA degradation. The cofactor is Mg(2+).

The protein resides in the cytoplasm. It localises to the secreted. It is found in the cell surface. It carries out the reaction (2R)-2-phosphoglycerate = phosphoenolpyruvate + H2O. It functions in the pathway carbohydrate degradation; glycolysis; pyruvate from D-glyceraldehyde 3-phosphate: step 4/5. Functionally, catalyzes the reversible conversion of 2-phosphoglycerate (2-PG) into phosphoenolpyruvate (PEP). It is essential for the degradation of carbohydrates via glycolysis. The chain is Enolase from Saccharophagus degradans (strain 2-40 / ATCC 43961 / DSM 17024).